A 327-amino-acid polypeptide reads, in one-letter code: Pumilio homolog 18 (327 aa).

Residues 1–324 (MAVADNPFSM…NIANILDSFR (324 aa)) form the PUM-HD domain. Pumilio repeat units follow at residues 79-114 (SDSDYFMSIVTTKFGSRRVQKLLGKSDDVDAFFCAA), 115-149 (ILRRFLHITTDKYASYVTIRAMVVFDKVMKKALYE), 150-185 (RILYHALDLACDQHGCIALNDIITDADDPYYRDQLL), 186-222 (ELVASNALRLSNDASGNFVVQHVLTLYDSRCIHNIAV), 223-260 (NLYGQCIELSFKKYGSYIVEKLLEVEESMVVVVVELLG), and 261-295 (CDGDRLMRLARNEFGNFVVVKALRFTKMSRMDLFW).

It is found in the cytoplasm. Sequence-specific RNA-binding protein that regulates translation and mRNA stability by binding the 3'-UTR of target mRNAs. In Arabidopsis thaliana (Mouse-ear cress), this protein is Pumilio homolog 18 (APUM18).